We begin with the raw amino-acid sequence, 138 residues long: Ribosome-binding factor A (138 aa).

Residues 119 to 138 (DMDEKKNSDEKRDSDEKLED) form a disordered region.

Belongs to the RbfA family. Monomer. Binds 30S ribosomal subunits, but not 50S ribosomal subunits or 70S ribosomes.

It is found in the cytoplasm. Its function is as follows. One of several proteins that assist in the late maturation steps of the functional core of the 30S ribosomal subunit. Associates with free 30S ribosomal subunits (but not with 30S subunits that are part of 70S ribosomes or polysomes). Required for efficient processing of 16S rRNA. May interact with the 5'-terminal helix region of 16S rRNA. The polypeptide is Ribosome-binding factor A (Alkaliphilus metalliredigens (strain QYMF)).